Reading from the N-terminus, the 295-residue chain is Cytidine deaminase (295 aa).

CMP/dCMP-type deaminase domains are found at residues 48–168 (TDSE…FGPA) and 187–295 (KETD…YVAA). 89-91 (NME) lines the substrate pocket. A Zn(2+)-binding site is contributed by His102. The Proton donor role is filled by Glu104. Residues Cys129 and Cys132 each coordinate Zn(2+).

Belongs to the cytidine and deoxycytidylate deaminase family. As to quaternary structure, homodimer. Zn(2+) serves as cofactor.

It catalyses the reaction cytidine + H2O + H(+) = uridine + NH4(+). The catalysed reaction is 2'-deoxycytidine + H2O + H(+) = 2'-deoxyuridine + NH4(+). Its function is as follows. This enzyme scavenges exogenous and endogenous cytidine and 2'-deoxycytidine for UMP synthesis. The protein is Cytidine deaminase of Photobacterium profundum (strain SS9).